Reading from the N-terminus, the 225-residue chain is Ribonuclease HII (225 aa).

Residues 2 to 210 (GIVVGVDEAG…VRKLGGPWRS (209 aa)) form the RNase H type-2 domain. A divalent metal cation is bound by residues aspartate 8, glutamate 9, and aspartate 107.

It belongs to the RNase HII family. It depends on Mn(2+) as a cofactor. Mg(2+) serves as cofactor.

It localises to the cytoplasm. It catalyses the reaction Endonucleolytic cleavage to 5'-phosphomonoester.. Its function is as follows. Endonuclease that specifically degrades the RNA of RNA-DNA hybrids. The sequence is that of Ribonuclease HII (rnhB) from Aeropyrum pernix (strain ATCC 700893 / DSM 11879 / JCM 9820 / NBRC 100138 / K1).